A 388-amino-acid polypeptide reads, in one-letter code: Chorismate synthase (388 aa).

NADP(+) contacts are provided by Arg39 and Arg45. Residues 130 to 132 (RSS), 251 to 252 (NA), Gly296, 311 to 315 (KPIPT), and Arg337 each bind FMN.

It belongs to the chorismate synthase family. As to quaternary structure, homotetramer. The cofactor is FMNH2.

The catalysed reaction is 5-O-(1-carboxyvinyl)-3-phosphoshikimate = chorismate + phosphate. It participates in metabolic intermediate biosynthesis; chorismate biosynthesis; chorismate from D-erythrose 4-phosphate and phosphoenolpyruvate: step 7/7. Its function is as follows. Catalyzes the anti-1,4-elimination of the C-3 phosphate and the C-6 proR hydrogen from 5-enolpyruvylshikimate-3-phosphate (EPSP) to yield chorismate, which is the branch point compound that serves as the starting substrate for the three terminal pathways of aromatic amino acid biosynthesis. This reaction introduces a second double bond into the aromatic ring system. The protein is Chorismate synthase of Streptococcus pneumoniae (strain 70585).